The sequence spans 546 residues: Thermolysin (546 aa).

The signal sequence occupies residues Met1 to Ala25. A propeptide spans Lys26–Val228 (activation peptide). Residues Asp287, Asp289, Gln291, and Asp368 each coordinate Ca(2+). His372 contributes to the Zn(2+) binding site. Residue Glu373 is part of the active site. His376 and Glu396 together coordinate Zn(2+). Ca(2+) contacts are provided by Glu407, Asn413, Asp415, Glu417, Glu420, Tyr423, Thr424, Ile427, and Asp430. His461 serves as the catalytic Proton donor.

It belongs to the peptidase M4 family. Requires Ca(2+) as cofactor. The cofactor is Zn(2+).

The protein localises to the secreted. The catalysed reaction is Preferential cleavage: Xaa-|-Leu &gt; Xaa-|-Phe.. Extracellular zinc metalloprotease. The polypeptide is Thermolysin (Alicyclobacillus acidocaldarius subsp. acidocaldarius (Bacillus acidocaldarius)).